Consider the following 325-residue polypeptide: HTH-type transcriptional regulator BbuR (325 aa).

Residues 15 to 72 (LDTDLLNVFCWVAKTQSFSRAAAELGTSQPVITRKIGRLEECLGVALFVRSNRGCVLT) form the HTH lysR-type domain. A DNA-binding region (H-T-H motif) is located at residues 32–51 (FSRAAAELGTSQPVITRKIG).

Belongs to the LysR transcriptional regulatory family.

This chain is HTH-type transcriptional regulator BbuR (bbuR), found in Bordetella bronchiseptica (strain ATCC BAA-588 / NCTC 13252 / RB50) (Alcaligenes bronchisepticus).